A 529-amino-acid chain; its full sequence is MLMLLVRGTHYESLRSKVVLPTPLGGRGTEALVSECPSPDTGIRWRQSDEALRVNVGGVRRLLSARALARFPGTRLGRLQAAASEEQARRLCDDYDAAAREFYFDRHPGFFLGLLHFYRTGHLHVLDELCVFAFGQEADYWGLGENALAACCRARYLERRLTQPRAWDEDSDTPSSVDPCPDEISDVQRELARYGAARCGRLRRRLWLTMENPGYSLPSKLFSCVSISVVLASIAAMCIHSLPEYQAREAAAAVAAVAAGRSPEGVRDDPVLRRLEYFCIAWFSFEVSSRLLLAPSTRNFFCHPLNLIDIVSVLPFYLTLLAGVALGDQGGTGGKELGHLGKVVQVFRLMRIFRVLKLARHSTGLRSLGATLKHSYREVGILLLYLAVGVSVFSGVAYTAEKEEDVGFNTIPACWWWGTVSMTTVGYGDVVPVTVAGKLAASGCILGGILVVALPITIIFNKFSHFYRRQKALEAAVRNSNHQEFEDLLSSVDGVSEASLETSRETSQEGRSADLETQAPSEPPHPQMY.

The Cytoplasmic segment spans residues 1 to 217 (MLMLLVRGTH…LTMENPGYSL (217 aa)). The chain crosses the membrane as a helical span at residues 218-239 (PSKLFSCVSISVVLASIAAMCI). Topologically, residues 240-270 (HSLPEYQAREAAAAVAAVAAGRSPEGVRDDP) are extracellular. The helical transmembrane segment at 271-293 (VLRRLEYFCIAWFSFEVSSRLLL) threads the bilayer. Residues 294–304 (APSTRNFFCHP) are Cytoplasmic-facing. A helical membrane pass occupies residues 305-322 (LNLIDIVSVLPFYLTLLA). Topologically, residues 323 to 340 (GVALGDQGGTGGKELGHL) are extracellular. Residues 341–361 (GKVVQVFRLMRIFRVLKLARH) traverse the membrane as a helical; Voltage-sensor segment. Over 362–376 (STGLRSLGATLKHSY) the chain is Cytoplasmic. A helical transmembrane segment spans residues 377-398 (REVGILLLYLAVGVSVFSGVAY). Over 399 to 411 (TAEKEEDVGFNTI) the chain is Extracellular. An intramembrane region (helical) is located at residues 412–423 (PACWWWGTVSMT). The Selectivity filter motif lies at 424-429 (TVGYGD). Residues 424–431 (TVGYGDVV) lie within the membrane without spanning it. The Extracellular segment spans residues 432 to 438 (PVTVAGK). Residues 439 to 467 (LAASGCILGGILVVALPITIIFNKFSHFY) form a helical membrane-spanning segment. Over 468-529 (RRQKALEAAV…PSEPPHPQMY (62 aa)) the chain is Cytoplasmic. The segment at 494 to 529 (GVSEASLETSRETSQEGRSADLETQAPSEPPHPQMY) is disordered. A compositionally biased stretch (basic and acidic residues) spans 502-514 (TSRETSQEGRSAD).

This sequence belongs to the potassium channel family. S (TC 1.A.1.2) subfamily. Kv9.1/KCNS1 sub-subfamily. Heterotetramer with KCNB1. Heterotetramer with KCNB2. Does not form homomultimers.

It localises to the cell membrane. Functionally, potassium channel regulatory subunit that modulate the delayed rectifier voltage-gated potassium channel activity of KCNB1 and KCNB2 by altering their kinetics, expression levels, and shifting the half-inactivation potential to more polarized values. While it does not form functional channels on its own, it can form functional heterotetrameric channels with KCNB1 and KCNB2. Each regulatory subunit has unique regulatory properties that can lead to extensive inhibition, significant changes in kinetics, and/or substantial shifts in the voltage dependencies of the inactivation process. The sequence is that of Delayed-rectifier potassium channel regulatory subunit KCNS1 from Macaca mulatta (Rhesus macaque).